Reading from the N-terminus, the 528-residue chain is Probable protein phosphatase 2C 51 (528 aa).

Residues 8–28 (SLLNLGLLIIFFVFFFLVINC) traverse the membrane as a helical segment. In terms of domain architecture, PPM-type phosphatase spans 71-445 (RCHTAAIQGR…DNMAAVVVPL (375 aa)). Residues D117, G118, D385, and D436 each contribute to the Mn(2+) site.

The protein belongs to the PP2C family. It depends on Mg(2+) as a cofactor. Mn(2+) is required as a cofactor.

Its subcellular location is the membrane. It carries out the reaction O-phospho-L-seryl-[protein] + H2O = L-seryl-[protein] + phosphate. The catalysed reaction is O-phospho-L-threonyl-[protein] + H2O = L-threonyl-[protein] + phosphate. The chain is Probable protein phosphatase 2C 51 from Arabidopsis thaliana (Mouse-ear cress).